A 340-amino-acid polypeptide reads, in one-letter code: Large ribosomal subunit protein uL10 (340 aa).

The tract at residues 305 to 340 (APQPAEEKVEEAEEEEEEEEEASEEEALAGLGALFG) is disordered. A compositionally biased stretch (acidic residues) spans 312–331 (KVEEAEEEEEEEEEASEEEA).

The protein belongs to the universal ribosomal protein uL10 family. In terms of assembly, part of the 50S ribosomal subunit. Forms part of the ribosomal stalk which helps the ribosome interact with GTP-bound translation factors. Forms a heptameric L10(L12)2(L12)2(L12)2 complex, where L10 forms an elongated spine to which the L12 dimers bind in a sequential fashion.

Its function is as follows. Forms part of the ribosomal stalk, playing a central role in the interaction of the ribosome with GTP-bound translation factors. In Thermococcus gammatolerans (strain DSM 15229 / JCM 11827 / EJ3), this protein is Large ribosomal subunit protein uL10.